We begin with the raw amino-acid sequence, 257 residues long: Small ribosomal subunit protein uS2 (257 aa).

Belongs to the universal ribosomal protein uS2 family.

The protein is Small ribosomal subunit protein uS2 of Bartonella henselae (strain ATCC 49882 / DSM 28221 / CCUG 30454 / Houston 1) (Rochalimaea henselae).